The chain runs to 66 residues: Large ribosomal subunit protein uL29 (66 aa).

Belongs to the universal ribosomal protein uL29 family.

In Borrelia garinii subsp. bavariensis (strain ATCC BAA-2496 / DSM 23469 / PBi) (Borreliella bavariensis), this protein is Large ribosomal subunit protein uL29.